Reading from the N-terminus, the 206-residue chain is uncharacterized protein (206 aa).

The interval 128–206 (KRYNVQKPKV…DQSWLDELLR (79 aa)) is disordered. Polar residues predominate over residues 171 to 181 (YISSNHSSMHI).

The protein localises to the cytoplasm. It localises to the nucleus. This is an uncharacterized protein from Schizosaccharomyces pombe (strain 972 / ATCC 24843) (Fission yeast).